The chain runs to 182 residues: Ribulose bisphosphate carboxylase small subunit, chloroplastic (182 aa).

Residues 1–58 (MASSMISSATVATVSRATPAQATMVAPFTGLKSTAAFPATRKSNNDITSLASNGGRVQ) constitute a chloroplast transit peptide.

Belongs to the RuBisCO small chain family. In terms of assembly, heterohexadecamer of 8 large and 8 small subunits.

It localises to the plastid. Its subcellular location is the chloroplast. Functionally, ruBisCO catalyzes two reactions: the carboxylation of D-ribulose 1,5-bisphosphate, the primary event in carbon dioxide fixation, as well as the oxidative fragmentation of the pentose substrate. Both reactions occur simultaneously and in competition at the same active site. Although the small subunit is not catalytic it is essential for maximal activity. The polypeptide is Ribulose bisphosphate carboxylase small subunit, chloroplastic (Fagus crenata (Japanese beech)).